Here is a 320-residue protein sequence, read N- to C-terminus: Cytochrome f (320 aa).

A signal peptide spans 1-35; sequence MQNRNTFSWVKEQMTRFISVSIMIYVITRTSIANA. Residues Tyr-36, Cys-56, Cys-59, and His-60 each coordinate heme. Residues 286 to 306 form a helical membrane-spanning segment; that stretch reads VQGLLFFLASVILAQIFLVLK.

Belongs to the cytochrome f family. The 4 large subunits of the cytochrome b6-f complex are cytochrome b6, subunit IV (17 kDa polypeptide, petD), cytochrome f and the Rieske protein, while the 4 small subunits are PetG, PetL, PetM and PetN. The complex functions as a dimer. Heme is required as a cofactor.

Its subcellular location is the plastid. It localises to the chloroplast thylakoid membrane. In terms of biological role, component of the cytochrome b6-f complex, which mediates electron transfer between photosystem II (PSII) and photosystem I (PSI), cyclic electron flow around PSI, and state transitions. This is Cytochrome f from Acorus calamus (Sweet flag).